The primary structure comprises 222 residues: Phosphoenolpyruvate guanylyltransferase (222 aa).

Thr134, Gly150, and Ser153 together coordinate phosphoenolpyruvate.

Belongs to the CofC family.

It carries out the reaction phosphoenolpyruvate + GTP + H(+) = enolpyruvoyl-2-diphospho-5'-guanosine + diphosphate. It participates in cofactor biosynthesis; coenzyme F420 biosynthesis. In terms of biological role, guanylyltransferase that catalyzes the activation of phosphoenolpyruvate (PEP) as enolpyruvoyl-2-diphospho-5'-guanosine, via the condensation of PEP with GTP. It is involved in the biosynthesis of coenzyme F420, a hydride carrier cofactor. This is Phosphoenolpyruvate guanylyltransferase from Roseiflexus sp. (strain RS-1).